The sequence spans 775 residues: Dipeptidyl peptidase 4 (775 aa).

Positions 1–15 are cleaved as a signal peptide; sequence MKFLSLLLLVGVAQA. N-linked (GlcNAc...) asparagine glycosylation is found at Asn-81, Asn-111, and Asn-219. Residues Ser-613, Asp-690, and His-725 each act as charge relay system in the active site. N-linked (GlcNAc...) asparagine glycosylation is present at Asn-731.

This sequence belongs to the peptidase S9B family.

Its subcellular location is the secreted. It catalyses the reaction Release of an N-terminal dipeptide, Xaa-Yaa-|-Zaa-, from a polypeptide, preferentially when Yaa is Pro, provided Zaa is neither Pro nor hydroxyproline.. In terms of biological role, extracellular dipeptidyl-peptidase which removes N-terminal dipeptides sequentially from polypeptides having unsubstituted N-termini provided that the penultimate residue is proline. Contributes to pathogenicity. The polypeptide is Dipeptidyl peptidase 4 (DPP4) (Arthroderma otae (strain ATCC MYA-4605 / CBS 113480) (Microsporum canis)).